We begin with the raw amino-acid sequence, 655 residues long: Large subunit GTPase 1 homolog (655 aa).

The segment at 1-31 (MGRRRAPGGGSLGRVLIRHQTQRSRSHRHTD) is disordered. Residues 16-28 (LIRHQTQRSRSHR) are compositionally biased toward basic residues. Phosphoserine occurs at positions 93 and 97. The CP-type G domain occupies 164 to 441 (WRQLWRVIER…LCDCPGLVMP (278 aa)). 212 to 215 (NKAD) is a binding site for GTP. Ser-252 is modified (phosphoserine). The tract at residues 253 to 359 (KDEVNSVAGE…ENSQMSNKSH (107 aa)) is disordered. The span at 288 to 327 (EESESDDDDSEYEDCQEDEEEDWQTCSEEDSNPEEGQEEG) shows a compositional bias: acidic residues. Over residues 328 to 339 (GCDRDQKEHGPE) the composition is skewed to basic and acidic residues. Over residues 344-359 (QSRASPENSQMSNKSH) the composition is skewed to polar residues. GTP contacts are provided by residues 390–397 (GYPNVGKS) and 434–437 (DCPG). A disordered region spans residues 625 to 655 (SAENVPGKPWKKHGNRNKKEKSRRLYRHLDV). The span at 633–655 (PWKKHGNRNKKEKSRRLYRHLDV) shows a compositional bias: basic residues.

It belongs to the TRAFAC class YlqF/YawG GTPase family. LSG1 subfamily.

It is found in the cytoplasm. The protein localises to the endoplasmic reticulum. Its subcellular location is the nucleus. It localises to the cajal body. The catalysed reaction is GTP + H2O = GDP + phosphate + H(+). Functions as a GTPase. May act by mediating the release of NMD3 from the 60S ribosomal subunit after export into the cytoplasm during the 60S ribosomal subunit maturation. This is Large subunit GTPase 1 homolog from Rattus norvegicus (Rat).